We begin with the raw amino-acid sequence, 420 residues long: D-tagatose-1,6-bisphosphate aldolase subunit GatZ (420 aa).

It belongs to the GatZ/KbaZ family. GatZ subfamily. In terms of assembly, forms a complex with GatY.

Its pathway is carbohydrate metabolism; D-tagatose 6-phosphate degradation; D-glyceraldehyde 3-phosphate and glycerone phosphate from D-tagatose 6-phosphate: step 2/2. In terms of biological role, component of the tagatose-1,6-bisphosphate aldolase GatYZ that is required for full activity and stability of the Y subunit. Could have a chaperone-like function for the proper and stable folding of GatY. When expressed alone, GatZ does not show any aldolase activity. Is involved in the catabolism of galactitol. This Escherichia coli O17:K52:H18 (strain UMN026 / ExPEC) protein is D-tagatose-1,6-bisphosphate aldolase subunit GatZ.